The chain runs to 623 residues: MIMTQEKKKFDAEVGKILNLMIHSLYSNKEIFMRELISNASDACDKLRYLSQSNSELVAGDSNFKITVKVDKDNGQIIIRDNGIGMNKDDLIENLGTIARSGTANFLKSLSGDSKKDNMLIGQFGVGFYSSFMVADKVTVTSRKAGEDKVHIWESDGLGEYTVSDSDKEFTRGTEIVLHIKKEEDTFLDHFRLKHIVKSYSDHIAVPIYFFDEAGNNEIQLNSASALWTRPKSEITEEQYKEFYKSLSYAVDDPWITMHNKNEGAIEFTNLLFIPSSKTFDLFHPDRKRRVKLYIKRVFISDENIDLIPSYLRFLRGVVDSEDLPLNISRESLQHNSVLEKIKNAITKRVLGELRKKKEESPEEYNKFWANFGGALKEGLCEATTDHEKLLEVCIFRSALHNKMISLDEYIANFKEGQSTIYYLSGDNPDKLLSSPQIEGLLSKEIDVLLFTDTVDDFWVNVNSKYKEHAIKSATRSDIDVEQTTSQSEEKNTDSKKSDDEYKLLTDYFKETLGELVKEVKISKKLTSSPACLAVSDAAMDIRMERFLIEQKQIANASAKNLELNPKNKIIEKIFNDLKANNKNNEELVNLIFDQACILEGEPVADTGAFSKRLNDIVQKAIL.

The tract at residues 1–330 is a; substrate-binding; sequence MIMTQEKKKF…SEDLPLNISR (330 aa). A b region spans residues 331–546; the sequence is ESLQHNSVLE…DAAMDIRMER (216 aa). The segment at 477-497 is disordered; that stretch reads SDIDVEQTTSQSEEKNTDSKK. Positions 488 to 497 are enriched in basic and acidic residues; it reads SEEKNTDSKK. The segment at 547-623 is c; that stretch reads FLIEQKQIAN…LNDIVQKAIL (77 aa).

Belongs to the heat shock protein 90 family. As to quaternary structure, homodimer.

It localises to the cytoplasm. Its function is as follows. Molecular chaperone. Has ATPase activity. The sequence is that of Chaperone protein HtpG from Rickettsia massiliae (strain Mtu5).